We begin with the raw amino-acid sequence, 458 residues long: Dynein regulatory complex protein 10 (458 aa).

Coiled-coil stretches lie at residues 96-137, 209-255, and 285-379; these read GQTL…HKVN, IQDI…KNHL, and QVRL…IRAE. The IQ domain maps to 397–426; sequence MVRAATLIQAVWKGYLVRSILRSKKKKRGK. The interval 419-458 is disordered; that stretch reads SKKKKRGKGKGKDKGKGKEKPKEEKAKEKKPKAKGKGKKK. Residues 428–445 show a composition bias toward basic and acidic residues; it reads KGKDKGKGKEKPKEEKAK. Basic residues predominate over residues 446–458; it reads EKKPKAKGKGKKK.

It belongs to the DRC10 family. In terms of assembly, component of the nexin-dynein regulatory complex (N-DRC). Interacts with CFAP52.

The protein localises to the cytoplasm. It is found in the cytoskeleton. It localises to the flagellum axoneme. Its function is as follows. Component of the nexin-dynein regulatory complex (N-DRC), a key regulator of ciliary/flagellar motility which maintains the alignment and integrity of the distal axoneme and regulates microtubule sliding in motile axonemes. In Mus musculus (Mouse), this protein is Dynein regulatory complex protein 10 (Iqcd).